The following is a 97-amino-acid chain: Defensin-A2 (97 aa).

Positions 1 to 19 are cleaved as a signal peptide; it reads MRTLSLLLALLFLAAQTLA. A propeptide spanning residues 20 to 61 is cleaved from the precursor; the sequence is QPIDEGAEEVITEEPEITETQDPTTIMLIERGIGGDSTDATR. Cystine bridges form between cysteine 66–cysteine 93, cysteine 68–cysteine 82, and cysteine 72–cysteine 92. A propeptide spanning residues 96–97 is cleaved from the precursor; that stretch reads TS.

It belongs to the alpha-defensin family. Highly expressed in intestine, expressed at lower levels in spleen, and at very low levels in kidney and lung.

It localises to the secreted. Its function is as follows. Has antimicrobial activity. This is Defensin-A2 from Ornithorhynchus anatinus (Duckbill platypus).